Reading from the N-terminus, the 178-residue chain is Oligoribonuclease (178 aa).

One can recognise an Exonuclease domain in the interval 7-168 (LIWIDLEMTG…DDIRESIAEL (162 aa)). Tyr-128 is an active-site residue.

Belongs to the oligoribonuclease family.

It is found in the cytoplasm. In terms of biological role, 3'-to-5' exoribonuclease specific for small oligoribonucleotides. The polypeptide is Oligoribonuclease (Francisella tularensis subsp. holarctica (strain FTNF002-00 / FTA)).